A 227-amino-acid chain; its full sequence is MPYPLQLGFQDATSPIMEELLHFHDHTLMIVFLISSLVLYIITLMLTTKLTHTSTMDAQEVETVWTILPAVILILIALPSLRILYMMDEINNPLLTIKAMGHQWYWSYEYTDYEDLNFDSYMVPTSDLKPGELRLLEVDNRLVLPMELSIRMLISSEDVLHSWAVPSLGLKTDAIPGRLNQATLMATRPGLYYGQCSEICGSNHSFMPIVLELVPLKHFEDWSTSML.

Residues 1–14 (MPYPLQLGFQDATS) lie on the Mitochondrial intermembrane side of the membrane. The chain crosses the membrane as a helical span at residues 15–45 (PIMEELLHFHDHTLMIVFLISSLVLYIITLM). Residues 46 to 59 (LTTKLTHTSTMDAQ) lie on the Mitochondrial matrix side of the membrane. The chain crosses the membrane as a helical span at residues 60 to 87 (EVETVWTILPAVILILIALPSLRILYMM). The Mitochondrial intermembrane portion of the chain corresponds to 88–227 (DEINNPLLTI…HFEDWSTSML (140 aa)). Residues histidine 161, cysteine 196, glutamate 198, cysteine 200, histidine 204, and methionine 207 each contribute to the Cu cation site. Position 198 (glutamate 198) interacts with Mg(2+).

Belongs to the cytochrome c oxidase subunit 2 family. As to quaternary structure, component of the cytochrome c oxidase (complex IV, CIV), a multisubunit enzyme composed of 14 subunits. The complex is composed of a catalytic core of 3 subunits MT-CO1, MT-CO2 and MT-CO3, encoded in the mitochondrial DNA, and 11 supernumerary subunits COX4I, COX5A, COX5B, COX6A, COX6B, COX6C, COX7A, COX7B, COX7C, COX8 and NDUFA4, which are encoded in the nuclear genome. The complex exists as a monomer or a dimer and forms supercomplexes (SCs) in the inner mitochondrial membrane with NADH-ubiquinone oxidoreductase (complex I, CI) and ubiquinol-cytochrome c oxidoreductase (cytochrome b-c1 complex, complex III, CIII), resulting in different assemblies (supercomplex SCI(1)III(2)IV(1) and megacomplex MCI(2)III(2)IV(2)). Found in a complex with TMEM177, COA6, COX18, COX20, SCO1 and SCO2. Interacts with TMEM177 in a COX20-dependent manner. Interacts with COX20. Interacts with COX16. Requires Cu cation as cofactor.

It localises to the mitochondrion inner membrane. It catalyses the reaction 4 Fe(II)-[cytochrome c] + O2 + 8 H(+)(in) = 4 Fe(III)-[cytochrome c] + 2 H2O + 4 H(+)(out). Its function is as follows. Component of the cytochrome c oxidase, the last enzyme in the mitochondrial electron transport chain which drives oxidative phosphorylation. The respiratory chain contains 3 multisubunit complexes succinate dehydrogenase (complex II, CII), ubiquinol-cytochrome c oxidoreductase (cytochrome b-c1 complex, complex III, CIII) and cytochrome c oxidase (complex IV, CIV), that cooperate to transfer electrons derived from NADH and succinate to molecular oxygen, creating an electrochemical gradient over the inner membrane that drives transmembrane transport and the ATP synthase. Cytochrome c oxidase is the component of the respiratory chain that catalyzes the reduction of oxygen to water. Electrons originating from reduced cytochrome c in the intermembrane space (IMS) are transferred via the dinuclear copper A center (CU(A)) of subunit 2 and heme A of subunit 1 to the active site in subunit 1, a binuclear center (BNC) formed by heme A3 and copper B (CU(B)). The BNC reduces molecular oxygen to 2 water molecules using 4 electrons from cytochrome c in the IMS and 4 protons from the mitochondrial matrix. The protein is Cytochrome c oxidase subunit 2 (MT-CO2) of Dasypus novemcinctus (Nine-banded armadillo).